We begin with the raw amino-acid sequence, 288 residues long: Pirin-like protein CC_3178 (288 aa).

Belongs to the pirin family.

In Caulobacter vibrioides (strain ATCC 19089 / CIP 103742 / CB 15) (Caulobacter crescentus), this protein is Pirin-like protein CC_3178.